Here is a 161-residue protein sequence, read N- to C-terminus: Endoribonuclease YbeY (161 aa).

The Zn(2+) site is built by His-121, His-125, and His-131.

The protein belongs to the endoribonuclease YbeY family. Zn(2+) is required as a cofactor.

The protein localises to the cytoplasm. Single strand-specific metallo-endoribonuclease involved in late-stage 70S ribosome quality control and in maturation of the 3' terminus of the 16S rRNA. The polypeptide is Endoribonuclease YbeY (Stenotrophomonas maltophilia (strain K279a)).